Reading from the N-terminus, the 212-residue chain is Small ribosomal subunit protein uS5 (212 aa).

Residues 1–42 (MPGRERRDGGRSADKNDNNKGRNDRGRNDRNNRRGRGRDDDR) are disordered. The 64-residue stretch at 45 to 108 (YIERVVTINR…EEARKNFFRV (64 aa)) folds into the S5 DRBM domain.

Belongs to the universal ribosomal protein uS5 family. In terms of assembly, part of the 30S ribosomal subunit. Contacts proteins S4 and S8.

In terms of biological role, with S4 and S12 plays an important role in translational accuracy. Its function is as follows. Located at the back of the 30S subunit body where it stabilizes the conformation of the head with respect to the body. This chain is Small ribosomal subunit protein uS5, found in Corynebacterium kroppenstedtii (strain DSM 44385 / JCM 11950 / CIP 105744 / CCUG 35717).